Reading from the N-terminus, the 79-residue chain is Defensin-like protein 109 (79 aa).

The signal sequence occupies residues Met-1 to Cys-24. 4 cysteine pairs are disulfide-bonded: Cys-41–Cys-76, Cys-47–Cys-68, Cys-54–Cys-74, and Cys-58–Cys-75.

The protein belongs to the DEFL family.

It is found in the secreted. The sequence is that of Defensin-like protein 109 from Arabidopsis thaliana (Mouse-ear cress).